The sequence spans 466 residues: Alpha-1,3-mannosyltransferase CMT1 (466 aa).

Residues 1-23 (MFRNTLRTFPRPATPSLPTSSHS) form a disordered region. The Cytoplasmic segment spans residues 1-33 (MFRNTLRTFPRPATPSLPTSSHSPIARASLSKS). The helical; Signal-anchor for type II membrane protein transmembrane segment at 34–54 (PLFVLSLVLVCIFFLSFLSHP) threads the bilayer. Residues 55 to 466 (DPSARKLQWP…ETRWVQPWLE (412 aa)) lie on the Lumenal side of the membrane.

Requires Mg(2+) as cofactor. Mn(2+) is required as a cofactor. The cofactor is Co(2+).

The protein localises to the golgi apparatus membrane. Its pathway is protein modification; protein glycosylation. Functionally, responsible for addition of mannose residues in an alpha-1,3 linkage to a polymannosly precursor. May be involved in synthesis of capsule glucuronoxylomannan. The sequence is that of Alpha-1,3-mannosyltransferase CMT1 from Cryptococcus neoformans var. neoformans serotype D (strain JEC21 / ATCC MYA-565) (Filobasidiella neoformans).